The primary structure comprises 429 residues: 3-phosphoshikimate 1-carboxyvinyltransferase (429 aa).

3-phosphoshikimate contacts are provided by Lys20, Ser21, and Arg25. Lys20 lines the phosphoenolpyruvate pocket. Phosphoenolpyruvate-binding residues include Gly89 and Arg118. Residues Ser164, Ser165, Gln166, Ser192, Asp311, and Lys338 each contribute to the 3-phosphoshikimate site. Gln166 contacts phosphoenolpyruvate. Asp311 acts as the Proton acceptor in catalysis. Residues Arg342 and Arg384 each contribute to the phosphoenolpyruvate site.

Belongs to the EPSP synthase family. As to quaternary structure, monomer.

The protein resides in the cytoplasm. The catalysed reaction is 3-phosphoshikimate + phosphoenolpyruvate = 5-O-(1-carboxyvinyl)-3-phosphoshikimate + phosphate. The protein operates within metabolic intermediate biosynthesis; chorismate biosynthesis. In terms of biological role, catalyzes the transfer of the enolpyruvyl moiety of phosphoenolpyruvate (PEP) to the 5-hydroxyl of shikimate-3-phosphate (S3P) to produce enolpyruvyl shikimate-3-phosphate and inorganic phosphate. This Methanococcus maripaludis (strain C7 / ATCC BAA-1331) protein is 3-phosphoshikimate 1-carboxyvinyltransferase.